The sequence spans 2035 residues: MASAVSPANLPAVLLQPRWKRVVGWSGPVPRPRHGHRAVAIKELIVVFGGGNEGIVDELHVYNTATNQWFIPAVRGDIPPGCAAYGFVCDGTRLLVFGGMVEYGKYSNDLYELQASRWEWKRLKAKTPKNGPPPCPRLGHSFSLVGNKCYLFGGLANDSEDPKNNIPRYLNDLYILELRPGSGVVAWDIPITYGVLPPPRESHTAVVYTEKDNKKSKLVIYGGMSGCRLGDLWTLDIDTLTWNKPSLSGVAPLPRSLHSATTIGNKMYVFGGWVPLVMDDVKVATHEKEWKCTNTLACLNLDTMAWETILMDTLEDNIPRARAGHCAVAINTRLYIWSGRDGYRKAWNNQVCCKDLWYLETEKPPPPARVQLVRANTNSLEVSWGAVATADSYLLQLQKYDIPATAATATSPTPNPVPSVPANPPKSPAPAAAAPAVQPLTQVGITLLPQAAPAPPTTTTIQVLPTVPGSSISVPTAARTQGVPAVLKVTGPQATTGTPLVTMRPASQAGKAPVTVTSLPAGVRMVVPTQSAQGTVIGSSPQMSGMAALAAAAAATQKIPPSSAPTVLSVPAGTTIVKTMAVTPGTTTLPATVKVASSPVMVSNPATRMLKTAAAQVGTSVSSATNTSTRPIITVHKSGTVTVAQQAQVVTTVVGGVTKTITLVKSPISVPGGSALISNLGKVMSVVQTKPVQTSAVTGQASTGPVTQIIQTKGPLPAGTILKLVTSADGKPTTIITTTQASGAGTKPTILGISSVSPSTTKPGTTTIIKTIPMSAIITQAGATGVTSSPGIKSPITIITTKVMTSGTGAPAKIITAVPKIATGHGQQGVTQVVLKGAPGQPGTILRTVPMGGVRLVTPVTVSAVKPAVTTLVVKGTTGVTTLGTVTGTVSTSLAGAGGHSTSASLATPITTLGTIATLSSQVINPTAITVSAAQTTLTAAGGLTTPTITMQPVSQPTQVTLITAPSGVEAQPVHDLPVSILASPTTEQPTATVTIADSGQGDVQPGTVTLVCSNPPCETHETGTTNTATTTVVANLGGHPQPTQVQFVCDRQEAAASLVTSTVGQQNGSVVRVCSNPPCETHETGTTNTATTATSNMAGQHGCSNPPCETHETGTTNTATTAMSSVGANHQRDARRACAAGTPAVIRISVATGALEAAQGSKSQCQTRQTSATSTTMTVMATGAPCSAGPLLGPSMAREPGGRSPAFVQLAPLSSKVRLSSPSIKDLPAGRHSHAVSTAAMTRSSVGAGEPRMAPVCESLQGGSPSTTVTVTALEALLCPSATVTQVCSNPPCETHETGTTNTATTSNAGSAQRVCSNPPCETHETGTTHTATTATSNGGTGQPEGGQQPPAGRPCETHQTTSTGTTMSVSVGALLPDATSSHRTVESGLEVAAAPSVTPQAGTALLAPFPTQRVCSNPPCETHETGTTHTATTVTSNMSSNQDPPPAASDQGEVESTQGDSVNITSSSAITTTVSSTLTRAVTTVTQSTPVPGPSVPPPEELQVSPGPRQQLPPRQLLQSASTALMGESAEVLSASQTPELPAAVDLSSTGEPSSGQESAGSAVVATVVVQPPPPTQSEVDQLSLPQELMAEAQAGTTTLMVTGLTPEELAVTAAAEAAAQAAATEEAQALAIQAVLQAAQQAVMGTGEPMDTSEAAATVTQAELGHLSAEGQEGQATTIPIVLTQQELAALVQQQQLQEAQAQQQHHHLPTEALAPADSLNDPAIESNCLNELAGTVPSTVALLPSTATESLAPSNTFVAPQPVVVASPAKLQAAATLTEVANGIESLGVKPDLPPPPSKAPMKKENQWFDVGVIKGTNVMVTHYFLPPDDAVPSDDDLGTVPDYNQLKKQELQPGTAYKFRVAGINACGRGPFSEISAFKTCLPGFPGAPCAIKISKSPDGAHLTWEPPSVTSGKIIEYSVYLAIQSSQAGGELKSSTPAQLAFMRVYCGPSPSCLVQSSSLSNAHIDYTTKPAIIFRIAARNEKGYGPATQVRWLQETSKDSSGTKPANKRPMSSPEMKSAPKKSKADGQ.

Residue A2 is modified to N-acetylalanine. S6 is subject to Phosphoserine. Kelch repeat units follow at residues 44 to 89, 93 to 140, 148 to 194, 217 to 265, and 266 to 313; these read LIVV…GFVC, RLLV…RLGH, KCYL…ITYG, KLVI…TIGN, and KMYV…LMDT. Residues K105, K163, and K244 each participate in a glycyl lysine isopeptide (Lys-Gly) (interchain with G-Cter in ubiquitin) cross-link. K282 is covalently cross-linked (Glycyl lysine isopeptide (Lys-Gly) (interchain with G-Cter in SUMO2)). N6-acetyllysine is present on K288. K363 is covalently cross-linked (Glycyl lysine isopeptide (Lys-Gly) (interchain with G-Cter in ubiquitin)). One can recognise a Fibronectin type-III 1 domain in the interval 366-466; sequence PPARVQLVRA…TTTTIQVLPT (101 aa). Residues 407-434 are disordered; it reads ATATSPTPNPVPSVPANPPKSPAPAAAA. At S411 the chain carries Phosphoserine. Residues 413–428 are compositionally biased toward pro residues; sequence TPNPVPSVPANPPKSP. A required for interaction with OGT region spans residues 500–550; it reads LVTMRPASQAGKAPVTVTSLPAGVRMVVPTQSAQGTVIGSSPQMSGMAALA. Residues R504 and R524 each carry the omega-N-methylarginine modification. S598, S666, and S669 each carry phosphoserine. Residues 610–722 are interaction with SIN3A; that stretch reads LKTAAAQVGT…KGPLPAGTIL (113 aa). Residues 750-902 are interaction with ZBTB17; the sequence is ILGISSVSPS…SLAGAGGHST (153 aa). The residue at position 813 (K813) is an N6-acetyllysine. Residues 813–912 are interaction with GABP2; it reads KIITAVPKIA…SASLATPITT (100 aa). 3 HCF repeat repeats span residues 1010 to 1035, 1072 to 1097, and 1101 to 1126; these read TLVCSNPPCETHETGTTNTATTTVVA, VRVCSNPPCETHETGTTNTATTATSN, and QHGCSNPPCETHETGTTNTATTAMSS. Residues 1158–1183 form an HCF repeat 4; degenerate repeat; sequence AAQGSKSQCQTRQTSATSTTMTVMAT. Position 1205 is a phosphoserine (S1205). Position 1219 is an omega-N-methylarginine (R1219). Phosphoserine is present on S1224. 2 HCF repeat repeats span residues 1286–1311 and 1314–1339; these read TQVCSNPPCETHETGTTNTATTSNAG and QRVCSNPPCETHETGTTHTATTATSN. Disordered regions lie at residues 1292–1371, 1435–1470, and 1487–1515; these read PPCE…TMSV, TVTSNMSSNQDPPPAASDQGEVESTQGDSVNITSSS, and VTQSTPVPGPSVPPPEELQVSPGPRQQLP. 3 stretches are compositionally biased toward low complexity: residues 1299 to 1312, 1329 to 1339, and 1362 to 1371; these read TGTTNTATTSNAGS, TTHTATTATSN, and TTSTGTTMSV. One copy of the HCF repeat 7; degenerate repeat lies at 1349–1374; it reads QQPPAGRPCETHQTTSTGTTMSVSVG. One copy of the HCF repeat 8 repeat lies at 1414–1439; that stretch reads QRVCSNPPCETHETGTTHTATTVTSN. T1491 carries the post-translational modification Phosphothreonine. The span at 1493-1502 shows a compositional bias: pro residues; that stretch reads VPGPSVPPPE. Phosphoserine occurs at positions 1497, 1507, and 1771. Fibronectin type-III domains lie at 1797 to 1888 and 1890 to 2006; these read LPPP…TCLP and FPGA…TSKD. Residues K1807 and K1808 each participate in a glycyl lysine isopeptide (Lys-Gly) (interchain with G-Cter in ubiquitin) cross-link. S1838 is subject to Phosphoserine. The disordered stretch occupies residues 1994 to 2035; it reads ATQVRWLQETSKDSSGTKPANKRPMSSPEMKSAPKKSKADGQ. Position 2005 is an N6-acetyllysine (K2005). K2024 is covalently cross-linked (Glycyl lysine isopeptide (Lys-Gly) (interchain with G-Cter in SUMO2)).

In terms of assembly, composed predominantly of six polypeptides ranging from 110 to 150 kDa and a minor 300 kDa polypeptide. The majority of N- and C-terminal cleavage products remain tightly, albeit non-covalently, associated. Interacts with POU2F1, CREB3, ZBTB17, EGR2, E2F4, CREBZF, SP1, GABP2, Sin3 HDAC complex (SIN3A, HDAC1, HDAC2, SUDS3), SAP30, SIN3B and FHL2. Component of a MLL1 complex, composed of at least the core components KMT2A/MLL1, ASH2L, HCFC1, WDR5 and RBBP5, as well as the facultative components BACC1, CHD8, DPY30, E2F6, HCFC2, HSP70, INO80C, KANSL1, LAS1L, MAX, MCRS1, MEN1, MGA, KAT8, PELP1, PHF20, PRP31, RING2, RUVBL1, RUVBL2, SENP3, TAF1, TAF4, TAF6, TAF7, TAF9 and TEX10. Component of a THAP1/THAP3-HCFC1-OGT complex that is required for the regulation of the transcriptional activity of RRM1. Interacts directly with THAP3 (via its HBM). Interacts (via the Kelch-repeat domain) with THAP1 (via the HBM); the interaction recruits HCHC1 to the RRM1. Interacts with THAP7 and THAP11 (via the HMB). Interacts directly with OGT; the interaction, which requires the HCFC1 cleavage site domain, glycosylates and promotes the proteolytic processing of HCFC1, retains OGT in the nucleus and impacts the expression of herpes simplex virus immediate early viral genes. Component of the SET1 complex, at least composed of the catalytic subunit (SETD1A or SETD1B), WDR5, WDR82, RBBP5, ASH2L, CXXC1, HCFC1 and DPY30. Component of the NSL complex at least composed of MOF/KAT8, KANSL1, KANSL2, KANSL3, MCRS1, PHF20, OGT1/OGT, WDR5 and HCFC1. Component of a complex at least composed of ZNF335, HCFC1, CCAR2, EMSY, MKI67, RBBP5, ASH2L and WDR5; the complex is formed as a result of interactions between components of a nuclear receptor-mediated transcription complex and a histone methylation complex. Within the complex interacts with ZNF335. Interacts with TET2 and TET3. Interacts with HCFC1R1. Interacts with THAP11. Interacts (via Kelch domain) with KMT2E/MLL5 isoform 3 (via HBM motif). Interacts with E2F1. Accessory scaffold component of the polycomb repressive deubiquitinase (PR-DUB) complex, at least composed of BAP1, one of ASXL1, ASXL2 or (probably) ASXL3 and one of MBD5 or MBD6; the PR-DUB core associates with a number of accessory proteins, including FOXK1, FOXK2, KDM1B, HCFC1, YY1 and OGT. Interacts with YY1 (via Gly-rich region); the interaction is direct. Interacts with BAP1 (via HBM-like motif). (Microbial infection) Associates with the VP16-induced complex; binding to HCFC1 activates the viral transcriptional activator VP16 for association with POU2F1, to form a multiprotein-DNA complex responsible for activating transcription of the viral immediate early genes. Interacts with the viral transactivator protein VP16. Proteolytically cleaved at one or several PPCE--THET sites within the HCF repeats. Further cleavage of the primary N- and C-terminal chains results in a 'trimming' and accumulation of the smaller chains. Cleavage is promoted by O-glycosylation. In terms of processing, O-glycosylated. GlcNAcylation by OGT promotes proteolytic processing. Post-translationally, ubiquitinated. Lys-1807 and Lys-1808 are ubiquitinated both via 'Lys-48'- and 'Lys-63'-linked polyubiquitin chains. BAP1 mediated deubiquitination of 'Lys-48'-linked polyubiquitin chains; deubiquitination by BAP1 does not seem to stabilize the protein. In terms of tissue distribution, highly expressed in fetal tissues and the adult kidney. Present in all tissues tested.

The protein localises to the cytoplasm. Its subcellular location is the nucleus. In terms of biological role, transcriptional coregulator. Serves as a scaffold protein, bridging interactions between transcription factors, including THAP11 and ZNF143, and transcriptional coregulators. Involved in control of the cell cycle. Also antagonizes transactivation by ZBTB17 and GABP2; represses ZBTB17 activation of the p15(INK4b) promoter and inhibits its ability to recruit p300. Coactivator for EGR2 and GABP2. Tethers the chromatin modifying Set1/Ash2 histone H3 'Lys-4' methyltransferase (H3K4me) and Sin3 histone deacetylase (HDAC) complexes (involved in the activation and repression of transcription, respectively) together. Component of a THAP1/THAP3-HCFC1-OGT complex that is required for the regulation of the transcriptional activity of RRM1. As part of the NSL complex it may be involved in acetylation of nucleosomal histone H4 on several lysine residues. Recruits KMT2E/MLL5 to E2F1 responsive promoters promoting transcriptional activation and thereby facilitates G1 to S phase transition. Modulates expression of homeobox protein PDX1, perhaps acting in concert with transcription factor E2F1, thereby regulating pancreatic beta-cell growth and glucose-stimulated insulin secretion. May negatively modulate transcriptional activity of FOXO3. Functionally, (Microbial infection) In case of human herpes simplex virus (HSV) infection, HCFC1 forms a multiprotein-DNA complex with the viral transactivator protein VP16 and POU2F1 thereby enabling the transcription of the viral immediate early genes. The protein is Host cell factor 1 of Homo sapiens (Human).